The sequence spans 120 residues: MARIAGVNIPNHKHAEIALTAIYGIGRSRAQKICDAAGVVRSAKIKDLTESDMEKLRDEVGRFVVEGDLRREVTMNIKRLMDLGCYRGVRHRRGLPLRGQRTRTNARTRKGPRKAIAGKK.

The disordered stretch occupies residues 94–120; it reads GLPLRGQRTRTNARTRKGPRKAIAGKK.

Belongs to the universal ribosomal protein uS13 family. As to quaternary structure, part of the 30S ribosomal subunit. Forms a loose heterodimer with protein S19. Forms two bridges to the 50S subunit in the 70S ribosome.

Its function is as follows. Located at the top of the head of the 30S subunit, it contacts several helices of the 16S rRNA. In the 70S ribosome it contacts the 23S rRNA (bridge B1a) and protein L5 of the 50S subunit (bridge B1b), connecting the 2 subunits; these bridges are implicated in subunit movement. Contacts the tRNAs in the A and P-sites. The polypeptide is Small ribosomal subunit protein uS13 (Azoarcus sp. (strain BH72)).